The chain runs to 559 residues: Membrane protein insertase YidC (559 aa).

Residues 7–24 (ILWVIFSMSLVLLYDNWQ) traverse the membrane as a helical segment. Low complexity-rich tracts occupy residues 45-55 (APAASGAAAQG) and 63-82 (QPAT…QAAA). The segment at 45–82 (APAASGAAAQGDVPKANVQPATGTSAAPAAGAAPQAAA) is disordered. The next 5 helical transmembrane spans lie at 338–358 (LELV…FWLL), 364–384 (FLGN…LVFF), 434–454 (LGGC…YWVL), 472–492 (LSVP…MFVQ), and 507–527 (VMMI…AGLV).

It belongs to the OXA1/ALB3/YidC family. Type 1 subfamily. As to quaternary structure, interacts with the Sec translocase complex via SecD. Specifically interacts with transmembrane segments of nascent integral membrane proteins during membrane integration.

The protein localises to the cell inner membrane. In terms of biological role, required for the insertion and/or proper folding and/or complex formation of integral membrane proteins into the membrane. Involved in integration of membrane proteins that insert both dependently and independently of the Sec translocase complex, as well as at least some lipoproteins. Aids folding of multispanning membrane proteins. The sequence is that of Membrane protein insertase YidC from Cupriavidus taiwanensis (strain DSM 17343 / BCRC 17206 / CCUG 44338 / CIP 107171 / LMG 19424 / R1) (Ralstonia taiwanensis (strain LMG 19424)).